Here is a 122-residue protein sequence, read N- to C-terminus: MAQRVTYRRRNPYNTRSNKIKVVKTPGGKLVAQHVKKAASRVKCGDCGSALAGISTLRPRQYAQVSKTHKTVQRAYGGSRCANCVKERIVRAFLIEEQKIVKRVLKEQQDKEKKAAKKTGKK.

It belongs to the eukaryotic ribosomal protein eL34 family. As to quaternary structure, component of the large ribosomal subunit. Mature ribosomes consist of a small (40S) and a large (60S) subunit. The 40S subunit contains about 32 different proteins and 1 molecule of RNA (18S). The 60S subunit contains 45 different proteins and 3 molecules of RNA (25S, 5.8S and 5S).

The protein localises to the cytoplasm. In terms of biological role, component of the ribosome, a large ribonucleoprotein complex responsible for the synthesis of proteins in the cell. The small ribosomal subunit (SSU) binds messenger RNAs (mRNAs) and translates the encoded message by selecting cognate aminoacyl-transfer RNA (tRNA) molecules. The large subunit (LSU) contains the ribosomal catalytic site termed the peptidyl transferase center (PTC), which catalyzes the formation of peptide bonds, thereby polymerizing the amino acids delivered by tRNAs into a polypeptide chain. The nascent polypeptides leave the ribosome through a tunnel in the LSU and interact with protein factors that function in enzymatic processing, targeting, and the membrane insertion of nascent chains at the exit of the ribosomal tunnel. The polypeptide is Large ribosomal subunit protein eL34 (Candida albicans (strain SC5314 / ATCC MYA-2876) (Yeast)).